We begin with the raw amino-acid sequence, 679 residues long: tRNA uridine 5-carboxymethylaminomethyl modification enzyme MnmG (679 aa).

13–18 (GGGHAG) provides a ligand contact to FAD. 280 to 294 (GPRYCPSVEDKINRF) provides a ligand contact to NAD(+).

This sequence belongs to the MnmG family. Homodimer. Heterotetramer of two MnmE and two MnmG subunits. It depends on FAD as a cofactor.

It is found in the cytoplasm. Its function is as follows. NAD-binding protein involved in the addition of a carboxymethylaminomethyl (cmnm) group at the wobble position (U34) of certain tRNAs, forming tRNA-cmnm(5)s(2)U34. This Albidiferax ferrireducens (strain ATCC BAA-621 / DSM 15236 / T118) (Rhodoferax ferrireducens) protein is tRNA uridine 5-carboxymethylaminomethyl modification enzyme MnmG.